Consider the following 217-residue polypeptide: Cytidylate kinase (217 aa).

Position 21–29 (21–29 (GPAASGKGT)) interacts with ATP.

Belongs to the cytidylate kinase family. Type 1 subfamily.

It is found in the cytoplasm. The catalysed reaction is CMP + ATP = CDP + ADP. It carries out the reaction dCMP + ATP = dCDP + ADP. The protein is Cytidylate kinase of Rickettsia bellii (strain OSU 85-389).